The primary structure comprises 72 residues: Protein SlyX (72 aa).

Residues 53 to 72 are disordered; sequence KSSQSSMLARPEDETPPPHY.

The protein belongs to the SlyX family.

This Proteus mirabilis (strain HI4320) protein is Protein SlyX.